The sequence spans 240 residues: NAD(P)H-quinone oxidoreductase subunit K (240 aa).

[4Fe-4S] cluster contacts are provided by Cys55, Cys56, Cys120, and Cys151.

Belongs to the complex I 20 kDa subunit family. In terms of assembly, NDH-1 can be composed of about 15 different subunits; different subcomplexes with different compositions have been identified which probably have different functions. [4Fe-4S] cluster is required as a cofactor.

The protein localises to the cellular thylakoid membrane. The enzyme catalyses a plastoquinone + NADH + (n+1) H(+)(in) = a plastoquinol + NAD(+) + n H(+)(out). The catalysed reaction is a plastoquinone + NADPH + (n+1) H(+)(in) = a plastoquinol + NADP(+) + n H(+)(out). Functionally, NDH-1 shuttles electrons from an unknown electron donor, via FMN and iron-sulfur (Fe-S) centers, to quinones in the respiratory and/or the photosynthetic chain. The immediate electron acceptor for the enzyme in this species is believed to be plastoquinone. Couples the redox reaction to proton translocation, and thus conserves the redox energy in a proton gradient. Cyanobacterial NDH-1 also plays a role in inorganic carbon-concentration. This Trichodesmium erythraeum (strain IMS101) protein is NAD(P)H-quinone oxidoreductase subunit K.